Consider the following 519-residue polypeptide: Lysine histidine transporter-like 8 (519 aa).

The disordered stretch occupies residues 1–44 (MDERPETELISIPATPRVSTPEILTPSGQRSPRPATKPSSATWT). Topologically, residues 1–114 (MDERPETELI…NLNAGVGFQA (114 aa)) are cytoplasmic. Transmembrane regions (helical) follow at residues 115 to 135 (LVLP…SLTI) and 136 to 156 (AYCW…AVPG). Residues 157-176 (KRYNRYVELAQAAFGERLGV) lie on the Cytoplasmic side of the membrane. The chain crosses the membrane as a helical span at residues 177-197 (WLALFPTVYLSAGTATALILI). The Extracellular portion of the chain corresponds to 198 to 217 (GGETMKLFFQIVCGPLCTSN). Residues 218 to 238 (PLTTVEWYLVFTSLCIVLSQL) form a helical membrane-spanning segment. Over 239 to 243 (PNLNS) the chain is Cytoplasmic. The helical transmembrane segment at 244–264 (IAGLSLIGAVTAITYSTMVWV) threads the bilayer. The Extracellular segment spans residues 265 to 282 (LSVSQPRPATISYEPLSM). Residues 283-303 (PSTSGSLFAVLNALGIIAFAF) form a helical membrane-spanning segment. Topologically, residues 304–333 (RGHNLVLEIQSTMPSTFKHPAHVPMWRGAK) are cytoplasmic. A helical membrane pass occupies residues 334–354 (ISYFLIALCIFPISIGGFWAY). Residues 355-377 (GNLMPSGGMLAALYAFHIHDIPR) are Extracellular-facing. The chain crosses the membrane as a helical span at residues 378-398 (GLLATAFLLVVFSCLSSFQIY). At 399 to 427 (SMPAFDSFEAGYTSRTNKPCSIWVRSGFR) the chain is on the cytoplasmic side. Residues 428 to 448 (VFFGFVSFFIGVALPFLSSLA) form a helical membrane-spanning segment. Residue G449 is a topological domain, extracellular. A helical membrane pass occupies residues 450–470 (LLGGLTLPVTFAYPCFMWVLI). Residues 471–485 (KKPAKYSFNWYFHWG) are Cytoplasmic-facing. A helical transmembrane segment spans residues 486 to 506 (LGWLGVAFSLAFSIGGIWSMV). The Extracellular portion of the chain corresponds to 507–519 (TNGLKLKFFKPPN).

Belongs to the amino acid/polyamine transporter 2 family. Amino acid/auxin permease (AAAP) (TC 2.A.18.2) subfamily.

The protein resides in the cell membrane. Functionally, amino acid transporter. The sequence is that of Lysine histidine transporter-like 8 (AATL1) from Arabidopsis thaliana (Mouse-ear cress).